The following is a 557-amino-acid chain: Formate--tetrahydrofolate ligase (557 aa).

T65–T72 contacts ATP.

Belongs to the formate--tetrahydrofolate ligase family.

It catalyses the reaction (6S)-5,6,7,8-tetrahydrofolate + formate + ATP = (6R)-10-formyltetrahydrofolate + ADP + phosphate. Its pathway is one-carbon metabolism; tetrahydrofolate interconversion. The sequence is that of Formate--tetrahydrofolate ligase from Methylorubrum populi (strain ATCC BAA-705 / NCIMB 13946 / BJ001) (Methylobacterium populi).